The chain runs to 131 residues: Hypocretin neuropeptide precursor (131 aa).

Gln-34 bears the Pyrrolidone carboxylic acid mark. 2 disulfides stabilise this stretch: Cys-39–Cys-45 and Cys-40–Cys-47. Leu-66 bears the Leucine amide mark. A disordered region spans residues 104-131 (EPALRPCSGRRCPSEAASSVAPGGRSGV).

This sequence belongs to the orexin family.

It localises to the rough endoplasmic reticulum. It is found in the cytoplasmic vesicle. Its subcellular location is the synapse. Its function is as follows. Neuropeptides that play a significant role in the regulation of food intake and sleep-wakefulness, possibly by coordinating the complex behavioral and physiologic responses of these complementary homeostatic functions. A broader role in the homeostatic regulation of energy metabolism, autonomic function, hormonal balance and the regulation of body fluids, is also suggested. Binds to orexin receptors HCRTR1/OX1R and HCRTR2/OX2R with a high affinity. Stimulates food intake. Modulates pituitary luteinizing hormone secretion in an ovarian steroid-dependent manner. Functionally, binds to orexin receptor HCRTR2/OX2R only. Stimulates food intake. Modulates pituitary luteinizing hormone secretion in an ovarian steroid-dependent manner. The polypeptide is Hypocretin neuropeptide precursor (HCRT) (Bos taurus (Bovine)).